The primary structure comprises 145 residues: Pseudoazurin (145 aa).

The signal sequence occupies residues 1 to 22 (MFHHSLAAAAAALLALAAPGFA). The region spanning 27-115 (VHMLNKGESG…MGMVGLVQVG (89 aa)) is the Plastocyanin-like domain. Cu cation is bound by residues His-62, Cys-100, His-103, and Met-108. The interval 126-145 (TAKMPKKARERMDAELAQVN) is disordered.

Homodimer. It depends on Cu cation as a cofactor.

The protein localises to the periplasm. Its function is as follows. This soluble electron transfer copper protein is required for the inactivation of copper-containing nitrite reductase in the presence of oxygen. The protein is Pseudoazurin (pazS) of Paracoccus pantotrophus (Thiosphaera pantotropha).